A 151-amino-acid polypeptide reads, in one-letter code: Linear element protein Mug20 (151 aa).

The stretch at E56–E140 forms a coiled coil.

In terms of assembly, component of linear elements (LinEs), which are similar to synaptonemal complexes, at least composed of rec27, rec25, rec10 and mug20. Interacts with rec10.

It localises to the cytoplasm. The protein localises to the nucleus. The protein resides in the chromosome. In terms of biological role, during meiotic DNA recombination, binds to and may help activate DNA double-strand break (DSB) hotspot sites. The protein is Linear element protein Mug20 of Schizosaccharomyces pombe (strain 972 / ATCC 24843) (Fission yeast).